Consider the following 179-residue polypeptide: Large ribosomal subunit protein uL5 (179 aa).

It belongs to the universal ribosomal protein uL5 family. In terms of assembly, part of the 50S ribosomal subunit; part of the 5S rRNA/L5/L18/L25 subcomplex. Contacts the 5S rRNA and the P site tRNA. Forms a bridge to the 30S subunit in the 70S ribosome.

In terms of biological role, this is one of the proteins that bind and probably mediate the attachment of the 5S RNA into the large ribosomal subunit, where it forms part of the central protuberance. In the 70S ribosome it contacts protein S13 of the 30S subunit (bridge B1b), connecting the 2 subunits; this bridge is implicated in subunit movement. Contacts the P site tRNA; the 5S rRNA and some of its associated proteins might help stabilize positioning of ribosome-bound tRNAs. In Pseudomonas fluorescens (strain ATCC BAA-477 / NRRL B-23932 / Pf-5), this protein is Large ribosomal subunit protein uL5.